The following is a 218-amino-acid chain: Small ribosomal subunit protein uS3c (218 aa).

The KH type-2 domain occupies 47–118 (VQKNIRISSG…KLNIAITRIS (72 aa)).

It belongs to the universal ribosomal protein uS3 family. Part of the 30S ribosomal subunit.

Its subcellular location is the plastid. The protein localises to the chloroplast. In Nasturtium officinale (Watercress), this protein is Small ribosomal subunit protein uS3c (rps3).